Reading from the N-terminus, the 124-residue chain is Small ribosomal subunit protein uS12 (124 aa).

Position 89 is a 3-methylthioaspartic acid (Asp89).

It belongs to the universal ribosomal protein uS12 family. As to quaternary structure, part of the 30S ribosomal subunit. Contacts proteins S8 and S17. May interact with IF1 in the 30S initiation complex.

Functionally, with S4 and S5 plays an important role in translational accuracy. Interacts with and stabilizes bases of the 16S rRNA that are involved in tRNA selection in the A site and with the mRNA backbone. Located at the interface of the 30S and 50S subunits, it traverses the body of the 30S subunit contacting proteins on the other side and probably holding the rRNA structure together. The combined cluster of proteins S8, S12 and S17 appears to hold together the shoulder and platform of the 30S subunit. The polypeptide is Small ribosomal subunit protein uS12 (Arthrobacter sp. (strain FB24)).